Here is a 608-residue protein sequence, read N- to C-terminus: Protein trichome birefringence (608 aa).

A helical; Signal-anchor for type II membrane protein transmembrane segment spans residues 38–58 (TFAYAFVITFVSFTLFFAFSP). Composition is skewed to polar residues over residues 101-137 (STKPTNRSSDATDSLSVNATSPPLNSNSKNGTLQTPA) and 145-203 (AKNT…TSPA). The interval 101–236 (STKPTNRSSD…TPKKQTKTVD (136 aa)) is disordered. Over residues 215-227 (TNSSSNSSTASST) the composition is skewed to low complexity. The GDS motif motif lies at 328-330 (GDS). The DCXHWCLPGXXDXWN motif motif lies at 573–587 (DCSHWCLPGVPDSWN).

This sequence belongs to the PC-esterase family. TBL subfamily. As to expression, expressed in leaf vasculature, growing part of the root, expanding inflorescence stems and trichomes.

It localises to the membrane. Functionally, required during cellulose deposition. May act as a bridging protein that binds pectin and other cell wall polysaccharides. Probably involved in maintaining esterification of pectins. May be involved in the specific O-acetylation of cell wall polymers. The chain is Protein trichome birefringence (TBR) from Arabidopsis thaliana (Mouse-ear cress).